The primary structure comprises 462 residues: 3-isopropylmalate dehydratase large subunit (462 aa).

Residues C337, C397, and C400 each contribute to the [4Fe-4S] cluster site.

It belongs to the aconitase/IPM isomerase family. LeuC type 1 subfamily. In terms of assembly, heterodimer of LeuC and LeuD. Requires [4Fe-4S] cluster as cofactor.

The enzyme catalyses (2R,3S)-3-isopropylmalate = (2S)-2-isopropylmalate. It functions in the pathway amino-acid biosynthesis; L-leucine biosynthesis; L-leucine from 3-methyl-2-oxobutanoate: step 2/4. In terms of biological role, catalyzes the isomerization between 2-isopropylmalate and 3-isopropylmalate, via the formation of 2-isopropylmaleate. This Listeria monocytogenes serotype 4b (strain CLIP80459) protein is 3-isopropylmalate dehydratase large subunit.